Here is a 433-residue protein sequence, read N- to C-terminus: PBSX phage terminase large subunit (433 aa).

It to B.subtilis YqaT and phage SPP1 terminase large subunit. As to quaternary structure, dimer of a small and a large subunit.

Functionally, functions as a terminase. The polypeptide is PBSX phage terminase large subunit (xtmB) (Bacillus subtilis (strain 168)).